Reading from the N-terminus, the 194-residue chain is Holliday junction branch migration complex subunit RuvA (194 aa).

Residues Met-1–Leu-64 are domain I. The interval Arg-65–Pro-140 is domain II. The segment at Pro-140–Gln-144 is flexible linker. Positions Leu-145–Arg-194 are domain III.

The protein belongs to the RuvA family. As to quaternary structure, homotetramer. Forms an RuvA(8)-RuvB(12)-Holliday junction (HJ) complex. HJ DNA is sandwiched between 2 RuvA tetramers; dsDNA enters through RuvA and exits via RuvB. An RuvB hexamer assembles on each DNA strand where it exits the tetramer. Each RuvB hexamer is contacted by two RuvA subunits (via domain III) on 2 adjacent RuvB subunits; this complex drives branch migration. In the full resolvosome a probable DNA-RuvA(4)-RuvB(12)-RuvC(2) complex forms which resolves the HJ.

The protein localises to the cytoplasm. In terms of biological role, the RuvA-RuvB-RuvC complex processes Holliday junction (HJ) DNA during genetic recombination and DNA repair, while the RuvA-RuvB complex plays an important role in the rescue of blocked DNA replication forks via replication fork reversal (RFR). RuvA specifically binds to HJ cruciform DNA, conferring on it an open structure. The RuvB hexamer acts as an ATP-dependent pump, pulling dsDNA into and through the RuvAB complex. HJ branch migration allows RuvC to scan DNA until it finds its consensus sequence, where it cleaves and resolves the cruciform DNA. The chain is Holliday junction branch migration complex subunit RuvA from Xanthomonas campestris pv. campestris (strain 8004).